We begin with the raw amino-acid sequence, 108 residues long: Guanine nucleotide-binding protein subunit gamma (108 aa).

Cys104 carries the S-palmitoyl cysteine lipid modification. The residue at position 105 (Cys105) is a Cysteine methyl ester. Cys105 is lipidated: S-farnesyl cysteine. Residues 106–108 (VIS) constitute a propeptide, removed in mature form.

The protein belongs to the G protein gamma family. As to quaternary structure, g proteins are composed of 3 units, alpha, beta and gamma.

It is found in the membrane. The protein is Guanine nucleotide-binding protein subunit gamma of Yarrowia lipolytica (strain CLIB 122 / E 150) (Yeast).